The chain runs to 351 residues: Alanine racemase (351 aa).

K34 (proton acceptor; specific for D-alanine) is an active-site residue. An N6-(pyridoxal phosphate)lysine modification is found at K34. Substrate is bound at residue R126. Y248 (proton acceptor; specific for L-alanine) is an active-site residue. Substrate is bound at residue M296.

This sequence belongs to the alanine racemase family. The cofactor is pyridoxal 5'-phosphate.

The enzyme catalyses L-alanine = D-alanine. It functions in the pathway amino-acid biosynthesis; D-alanine biosynthesis; D-alanine from L-alanine: step 1/1. Its function is as follows. Catalyzes the interconversion of L-alanine and D-alanine. May also act on other amino acids. This is Alanine racemase (alr) from Deinococcus radiodurans (strain ATCC 13939 / DSM 20539 / JCM 16871 / CCUG 27074 / LMG 4051 / NBRC 15346 / NCIMB 9279 / VKM B-1422 / R1).